A 334-amino-acid chain; its full sequence is HTH-type transcriptional repressor PurR (334 aa).

Residues 2-56 (ATIKDVARLAGVSTTTVSHVINKTRFVAEATQEKVNKAVDELNYAPSAVARSLKC) enclose the HTH lacI-type domain. Residues 4–23 (IKDVARLAGVSTTTVSHVIN) constitute a DNA-binding region (H-T-H motif). A DNA-binding region spans residues 48 to 56 (SAVARSLKC). Hypoxanthine-binding residues include F73, K189, F220, and D274.

In terms of assembly, homodimer.

It participates in purine metabolism; purine nucleotide biosynthesis [regulation]. Its function is as follows. Is the main repressor of the genes involved in the de novo synthesis of purine nucleotides, regulating purB, purC, purEK, purF, purHD, purL, purMN and guaBA expression. PurR is allosterically activated to bind its cognate DNA by binding the purine corepressors, hypoxanthine or guanine, thereby effecting transcription repression. In Vibrio atlanticus (strain LGP32) (Vibrio splendidus (strain Mel32)), this protein is HTH-type transcriptional repressor PurR.